We begin with the raw amino-acid sequence, 252 residues long: MDSAAAERPSSYAVNFPPLLPAPAPAVAGAMGVANHKSVLCMKWREGRCHNGVACRYAHGEEDQRIVPEMRVGGGGTSMHARSSPPRDGASSGSTASIAMAACRIEEQRHGRGGESFILPRSRRKRQALGSGSARSTAPTPPRAHTTPPCSRSVAAPRASTSPLRPSPVPPPATLHSAADVQRSVARALEDFEQRESSSSVFPLAIDIVAEDAMTATSEPSATSDDDAITTTTSSSTTDADELDAAVAAPPK.

The segment at 35–62 (NHKSVLCMKWREGRCHNGVACRYAHGEE) adopts a C3H1-type zinc-finger fold. 3 disordered regions span residues 71–95 (RVGG…SGST), 109–180 (RHGR…SAAD), and 215–252 (TATS…APPK). Composition is skewed to low complexity over residues 133–149 (SARS…TTPP) and 229–238 (ITTTTSSSTT).

The sequence is that of Putative zinc finger CCCH domain-containing protein 58 from Oryza sativa subsp. japonica (Rice).